We begin with the raw amino-acid sequence, 312 residues long: MSGIDPKRFGKVAVLLGGDSAEREVSLNSGRLVLQGLRDAGIDAHPFDPAQRPLAALKDEGFVRAFNALHGGYGENGQIQGALDFYGIRYTGSGVLGSALGLDKFRTKLVWQQTGIPTPPFETVMRGDDYAARAQDIVAKLGVPLFVKPASEGSSVAVEKVKSADALPAALEEAAKHDKIVIVEKSIEGGGEYTACIAADLDLPLIRIVPAGEFYDYHAKYIANDTQYLIPCGLDAAKEAEFKRIARRAFDVLGCTDWGRADFMLDAAGNPYFLEVNTAPGMTDHSLPPKAARAVGIGYSELVVKVLSLTLD.

Positions 108-308 (KLVWQQTGIP…YSELVVKVLS (201 aa)) constitute an ATP-grasp domain. 138–193 (VAKLGVPLFVKPASEGSSVAVEKVKSADALPAALEEAAKHDKIVIVEKSIEGGGEY) contributes to the ATP binding site. Residues aspartate 262, glutamate 275, and asparagine 277 each contribute to the Mg(2+) site.

It belongs to the D-alanine--D-alanine ligase family. Mg(2+) serves as cofactor. Requires Mn(2+) as cofactor.

Its subcellular location is the cytoplasm. It carries out the reaction 2 D-alanine + ATP = D-alanyl-D-alanine + ADP + phosphate + H(+). It functions in the pathway cell wall biogenesis; peptidoglycan biosynthesis. In terms of biological role, cell wall formation. This chain is D-alanine--D-alanine ligase, found in Burkholderia mallei (strain NCTC 10247).